A 193-amino-acid polypeptide reads, in one-letter code: Cytidylate kinase (193 aa).

Residue 12 to 20 (GLAGSGTTT) participates in ATP binding.

It belongs to the cytidylate kinase family. Type 2 subfamily.

Its subcellular location is the cytoplasm. It carries out the reaction CMP + ATP = CDP + ADP. The enzyme catalyses dCMP + ATP = dCDP + ADP. The polypeptide is Cytidylate kinase (Thermococcus kodakarensis (strain ATCC BAA-918 / JCM 12380 / KOD1) (Pyrococcus kodakaraensis (strain KOD1))).